Consider the following 610-residue polypeptide: UvrABC system protein C (610 aa).

The 80-residue stretch at 12–91 (TSPGVYLYKN…IKQKKPRFNI (80 aa)) folds into the GIY-YIG domain. The UVR domain maps to 202–237 (SDLKQSLTARMNKAAEGMQFELAAKYRDLITTVEDL).

Belongs to the UvrC family. Interacts with UvrB in an incision complex.

It localises to the cytoplasm. Its function is as follows. The UvrABC repair system catalyzes the recognition and processing of DNA lesions. UvrC both incises the 5' and 3' sides of the lesion. The N-terminal half is responsible for the 3' incision and the C-terminal half is responsible for the 5' incision. The protein is UvrABC system protein C of Koribacter versatilis (strain Ellin345).